The following is a 155-amino-acid chain: Ribosomal RNA large subunit methyltransferase H (155 aa).

S-adenosyl-L-methionine contacts are provided by residues Ile71, Gly103, and 122–127; that span reads FGRMVW.

The protein belongs to the RNA methyltransferase RlmH family. In terms of assembly, homodimer.

It is found in the cytoplasm. The enzyme catalyses pseudouridine(1915) in 23S rRNA + S-adenosyl-L-methionine = N(3)-methylpseudouridine(1915) in 23S rRNA + S-adenosyl-L-homocysteine + H(+). Specifically methylates the pseudouridine at position 1915 (m3Psi1915) in 23S rRNA. The polypeptide is Ribosomal RNA large subunit methyltransferase H (Cereibacter sphaeroides (strain ATCC 17025 / ATH 2.4.3) (Rhodobacter sphaeroides)).